A 1037-amino-acid polypeptide reads, in one-letter code: Outer dynein arm-docking complex subunit 2 (1037 aa).

Composition is skewed to basic and acidic residues over residues 316–334 (EEQQ…EDGH) and 376–391 (SSIK…KLEK). Disordered stretches follow at residues 316 to 353 (EEQQ…FGKS) and 376 to 439 (SSIK…ANAD). ARM repeat units lie at residues 477 to 516 (ETCQ…EISH), 518 to 557 (PQIR…NVAK), 528 to 570 (GGLP…QHGG), 615 to 654 (HSNK…ECAS), 656 to 695 (ENYR…QCAE), 739 to 778 (KENV…ECCQ), 821 to 860 (PESM…PCIE), 864 to 903 (DAGE…NIAK), 905 to 944 (QENL…RCCM), and 946 to 985 (GRNR…QLSE). At K545 the chain carries N6-methyllysine.

As to quaternary structure, component of the outer dynein arm-docking complex along with ODAD1, ODAD3, and ODAD4. Interacts with CFAP61. As to expression, highly expressed in testis. In males, also detected at lower levels in lung, brain, liver and muscle. In females, detected in ovary.

It is found in the cytoplasm. The protein localises to the cytoskeleton. It localises to the cilium axoneme. Its subcellular location is the cilium basal body. Component of the outer dynein arm-docking complex (ODA-DC) that mediates outer dynein arms (ODA) binding onto the doublet microtubule. Involved in mediating assembly of both ODAs and their axonemal docking complex onto ciliary microtubules. The chain is Outer dynein arm-docking complex subunit 2 from Mus musculus (Mouse).